Here is a 95-residue protein sequence, read N- to C-terminus: DNA-directed RNA polymerase subunit Rpo11 (95 aa).

Belongs to the archaeal Rpo11/eukaryotic RPB11/RPC19 RNA polymerase subunit family. As to quaternary structure, part of the RNA polymerase complex.

It localises to the cytoplasm. The enzyme catalyses RNA(n) + a ribonucleoside 5'-triphosphate = RNA(n+1) + diphosphate. DNA-dependent RNA polymerase (RNAP) catalyzes the transcription of DNA into RNA using the four ribonucleoside triphosphates as substrates. This chain is DNA-directed RNA polymerase subunit Rpo11, found in Pyrococcus horikoshii (strain ATCC 700860 / DSM 12428 / JCM 9974 / NBRC 100139 / OT-3).